Here is a 461-residue protein sequence, read N- to C-terminus: Argininosuccinate lyase (461 aa).

Belongs to the lyase 1 family. Argininosuccinate lyase subfamily.

The protein localises to the cytoplasm. It catalyses the reaction 2-(N(omega)-L-arginino)succinate = fumarate + L-arginine. It participates in amino-acid biosynthesis; L-arginine biosynthesis; L-arginine from L-ornithine and carbamoyl phosphate: step 3/3. The polypeptide is Argininosuccinate lyase (Laribacter hongkongensis (strain HLHK9)).